The chain runs to 633 residues: Chaperone protein DnaK (633 aa).

A Phosphothreonine; by autocatalysis modification is found at Thr196. The disordered stretch occupies residues Asn594 to Lys633. Residues His610–Gly619 are compositionally biased toward gly residues.

The protein belongs to the heat shock protein 70 family.

Its function is as follows. Acts as a chaperone. This Chlorobaculum tepidum (strain ATCC 49652 / DSM 12025 / NBRC 103806 / TLS) (Chlorobium tepidum) protein is Chaperone protein DnaK.